The following is a 223-amino-acid chain: Deoxyribose-phosphate aldolase (223 aa).

D91 functions as the Proton donor/acceptor in the catalytic mechanism. K154 acts as the Schiff-base intermediate with acetaldehyde in catalysis. K183 serves as the catalytic Proton donor/acceptor.

This sequence belongs to the DeoC/FbaB aldolase family. DeoC type 1 subfamily.

It is found in the cytoplasm. The catalysed reaction is 2-deoxy-D-ribose 5-phosphate = D-glyceraldehyde 3-phosphate + acetaldehyde. The protein operates within carbohydrate degradation; 2-deoxy-D-ribose 1-phosphate degradation; D-glyceraldehyde 3-phosphate and acetaldehyde from 2-deoxy-alpha-D-ribose 1-phosphate: step 2/2. Functionally, catalyzes a reversible aldol reaction between acetaldehyde and D-glyceraldehyde 3-phosphate to generate 2-deoxy-D-ribose 5-phosphate. The polypeptide is Deoxyribose-phosphate aldolase (Geobacillus thermodenitrificans (strain NG80-2)).